The sequence spans 365 residues: WAT1-related protein At4g01430 (365 aa).

A run of 10 helical transmembrane segments spans residues 7 to 27 (WAPVIVMLISSVAMGSVNALV), 39 to 59 (IFGAYRMAISALILVPFSYIW), 76 to 96 (FISGLLGASLMQFFFLLGLSY), 100 to 120 (TVSMALVSMLPAITFALALIF), 132 to 152 (AGVLKVMGTLICIMGAMLLTF), 183 to 203 (WLLGCLYLVIGTVLLSLWMLF), 216 to 236 (YSSTCLMSVFASFQCAILSLY), 250 to 270 (FVILVTLYAGIVGQAMSTVVT), 280 to 300 (VFVSTFSPVSLVAATLFDFLI), and 305 to 325 (LYLGSILGSVVTITGLYVFLW). Residues 20 to 151 (MGSVNALVKK…ICIMGAMLLT (132 aa)) form the EamA 1 domain. The EamA 2 domain maps to 216-324 (YSSTCLMSVF…VTITGLYVFL (109 aa)). Positions 339–365 (LNSSQFSQNKDNEDHTIANHKDTNLPV) are disordered. A compositionally biased stretch (basic and acidic residues) spans 348–365 (KDNEDHTIANHKDTNLPV).

This sequence belongs to the drug/metabolite transporter (DMT) superfamily. Plant drug/metabolite exporter (P-DME) (TC 2.A.7.4) family.

It is found in the membrane. The chain is WAT1-related protein At4g01430 from Arabidopsis thaliana (Mouse-ear cress).